A 132-amino-acid chain; its full sequence is Glycine cleavage system H protein (132 aa).

Residues 24–106 enclose the Lipoyl-binding domain; that stretch reads TVRVGLTDFA…YGAGWLLDVH (83 aa). Lys65 is subject to N6-lipoyllysine.

Belongs to the GcvH family. In terms of assembly, the glycine cleavage system is composed of four proteins: P, T, L and H. It depends on (R)-lipoate as a cofactor.

Its function is as follows. The glycine cleavage system catalyzes the degradation of glycine. The H protein shuttles the methylamine group of glycine from the P protein to the T protein. This Mycobacterium leprae (strain Br4923) protein is Glycine cleavage system H protein.